A 271-amino-acid polypeptide reads, in one-letter code: Energy-coupling factor transporter ATP-binding protein EcfA (271 aa).

An ABC transporter domain is found at 2 to 231; that stretch reads ISIQNLTFYY…PLFLQQYKLN (230 aa). 34–41 contacts ATP; that stretch reads GHNGSGKS.

This sequence belongs to the ABC transporter superfamily. Energy-coupling factor EcfA family. Forms a stable energy-coupling factor (ECF) transporter complex composed of 2 membrane-embedded substrate-binding proteins (S component), 2 ATP-binding proteins (A component) and 2 transmembrane proteins (T component).

It is found in the cell membrane. ATP-binding (A) component of a common energy-coupling factor (ECF) ABC-transporter complex. Unlike classic ABC transporters this ECF transporter provides the energy necessary to transport a number of different substrates. The protein is Energy-coupling factor transporter ATP-binding protein EcfA of Onion yellows phytoplasma (strain OY-M).